Here is a 914-residue protein sequence, read N- to C-terminus: Beta-mannosidase A (914 aa).

An N-terminal signal peptide occupies residues 1–20 (MRFTATAAALVASSIPATLG). N-linked (GlcNAc...) asparagine glycans are attached at residues Asn-39, Asn-79, Asn-230, Asn-265, Asn-299, Asn-309, and Asn-330. Glu-462 acts as the Proton donor in catalysis. N-linked (GlcNAc...) asparagine glycans are attached at residues Asn-591, Asn-614, Asn-641, Asn-721, Asn-744, Asn-773, Asn-784, and Asn-909.

This sequence belongs to the glycosyl hydrolase 2 family. Beta-mannosidase A subfamily. In terms of assembly, homodimer.

The protein resides in the secreted. The enzyme catalyses Hydrolysis of terminal, non-reducing beta-D-mannose residues in beta-D-mannosides.. It functions in the pathway glycan metabolism; N-glycan degradation. In terms of biological role, exoglycosidase that cleaves the single beta-linked mannose residue from the non-reducing end of beta-mannosidic oligosaccharides of various complexity and length. Involved in the degradation of polymeric mannan and galactomannan. The protein is Beta-mannosidase A (mndA) of Aspergillus flavus (strain ATCC 200026 / FGSC A1120 / IAM 13836 / NRRL 3357 / JCM 12722 / SRRC 167).